The sequence spans 867 residues: Probable potassium transporter 15 (867 aa).

Positions 1 to 13 (MAASSSSSASASA) are enriched in low complexity. The tract at residues 1–88 (MAASSSSSAS…EGEGEDGEKQ (88 aa)) is disordered. Residues 1–124 (MAASSSSSAS…DSEEFDFGRT (124 aa)) are Cytoplasmic-facing. The segment covering 32–44 (TEEDDEGEEDGDT) has biased composition (acidic residues). The segment covering 45-54 (VEAAAAAVGA) has biased composition (low complexity). The segment covering 63–84 (SEEEEDEEDGGGGGEGEGEGED) has biased composition (acidic residues). A helical membrane pass occupies residues 125 to 145 (MFLALQTLAVVFGDIGISPLY). Over 146-167 (TFDVMFSKYPILGEEDVLGALS) the chain is Extracellular. The chain crosses the membrane as a helical span at residues 168 to 188 (LVLYTLISMPLVKYVLVVLWA). The Cytoplasmic segment spans residues 189 to 252 (NDDGEGGIFA…KLESSLLLKK (64 aa)). The chain crosses the membrane as a helical span at residues 253–273 (LLLGLVLFGTAMFISNGVITP). Residues 274–285 (AMSVLSAVSGLK) lie on the Extracellular side of the membrane. Residues 286–306 (VGIPNASQGLVVMISVVLLVI) form a helical membrane-spanning segment. Topologically, residues 307–317 (LYSVQRYATSK) are cytoplasmic. Residues 318 to 338 (MGFALGPSLLIWFCCLGGIGI) traverse the membrane as a helical segment. The Extracellular portion of the chain corresponds to 339-365 (YNLSTYGPAAFKAFNPLYIIYYFGRNP). An N-linked (GlcNAc...) asparagine glycan is attached at asparagine 340. The helical transmembrane segment at 366 to 386 (FQAWLSLAGCLLCATGSEAIF) threads the bilayer. Over 387–400 (ANLSYFPVRYVQSM) the chain is Cytoplasmic. A helical membrane pass occupies residues 401–421 (FALLVLPCLVLAYLGQGAFLI). Residues 422-433 (ANQNSSEQIFFS) are Extracellular-facing. Asparagine 425 carries N-linked (GlcNAc...) asparagine glycosylation. The chain crosses the membrane as a helical span at residues 434 to 454 (SIPSGVFWPVFLIANLAALIA). Residues 455–490 (SRTMTTAIFQCLKQSIALGCFPRLKIIHTSRKFMAK) lie on the Cytoplasmic side of the membrane. A helical membrane pass occupies residues 491 to 511 (IYIPVVNWFLLFSCLGFILLF). The Extracellular segment spans residues 512-522 (RSIYDVGNAYA). Residues 523 to 543 (IAELGVMIMATVYVTIIMLLI) traverse the membrane as a helical segment. The Cytoplasmic segment spans residues 544-545 (WE). A helical transmembrane segment spans residues 546-566 (TSIVKVLSFVITFLSLELVFF). The Extracellular portion of the chain corresponds to 567-572 (SSSLSS). The chain crosses the membrane as a helical span at residues 573-593 (VGDGGWALIIFASGILMVMFI). At 594–867 (WNYGSKLKYD…VMQVRLTSYV (274 aa)) the chain is on the cytoplasmic side.

This sequence belongs to the HAK/KUP transporter (TC 2.A.72.3) family.

It is found in the membrane. Functionally, high-affinity potassium transporter. This chain is Probable potassium transporter 15 (HAK15), found in Oryza sativa subsp. japonica (Rice).